The primary structure comprises 367 residues: Probable protein phosphatase 2C 57 (367 aa).

Positions 1-29 are disordered; it reads MEEHRLGGGGGGGGGGGRPPIPGAAGRKL. Gly residues predominate over residues 7 to 18; it reads GGGGGGGGGGGR. The 265-residue stretch at 67 to 331 folds into the PPM-type phosphatase domain; sequence RSGGWADIGS…DNLSVVVICF (265 aa). The Mn(2+) site is built by D111, G112, D279, and D322.

The protein belongs to the PP2C family. Mg(2+) is required as a cofactor. The cofactor is Mn(2+).

It catalyses the reaction O-phospho-L-seryl-[protein] + H2O = L-seryl-[protein] + phosphate. The enzyme catalyses O-phospho-L-threonyl-[protein] + H2O = L-threonyl-[protein] + phosphate. In Oryza sativa subsp. japonica (Rice), this protein is Probable protein phosphatase 2C 57.